A 391-amino-acid polypeptide reads, in one-letter code: Chorismate synthase (391 aa).

Arginine 48 serves as a coordination point for NADP(+). FMN-binding positions include 126–128 (RAS), glycine 286, 301–305 (KPTSS), and arginine 328.

Belongs to the chorismate synthase family. FMNH2 serves as cofactor.

The catalysed reaction is 5-O-(1-carboxyvinyl)-3-phosphoshikimate = chorismate + phosphate. It functions in the pathway metabolic intermediate biosynthesis; chorismate biosynthesis; chorismate from D-erythrose 4-phosphate and phosphoenolpyruvate: step 7/7. Functionally, catalyzes the anti-1,4-elimination of the C-3 phosphate and the C-6 proR hydrogen from 5-enolpyruvylshikimate-3-phosphate (EPSP) to yield chorismate, which is the branch point compound that serves as the starting substrate for the three terminal pathways of aromatic amino acid biosynthesis. This reaction introduces a second double bond into the aromatic ring system. This Saccharolobus islandicus (strain L.S.2.15 / Lassen #1) (Sulfolobus islandicus) protein is Chorismate synthase.